The following is a 162-amino-acid chain: NADH-quinone oxidoreductase subunit I (162 aa).

2 consecutive 4Fe-4S ferredoxin-type domains span residues 53-83 (LRRY…IDSE) and 93-122 (TRYD…ETRI). [4Fe-4S] cluster contacts are provided by C63, C66, C69, C73, C102, C105, C108, and C112.

This sequence belongs to the complex I 23 kDa subunit family. As to quaternary structure, NDH-1 is composed of 14 different subunits. Subunits NuoA, H, J, K, L, M, N constitute the membrane sector of the complex. [4Fe-4S] cluster serves as cofactor.

The protein localises to the cell inner membrane. The catalysed reaction is a quinone + NADH + 5 H(+)(in) = a quinol + NAD(+) + 4 H(+)(out). In terms of biological role, NDH-1 shuttles electrons from NADH, via FMN and iron-sulfur (Fe-S) centers, to quinones in the respiratory chain. The immediate electron acceptor for the enzyme in this species is believed to be ubiquinone. Couples the redox reaction to proton translocation (for every two electrons transferred, four hydrogen ions are translocated across the cytoplasmic membrane), and thus conserves the redox energy in a proton gradient. This is NADH-quinone oxidoreductase subunit I from Thiobacillus denitrificans (strain ATCC 25259 / T1).